The following is a 351-amino-acid chain: DNA polymerase IV (351 aa).

In terms of domain architecture, UmuC spans 4–185 (IIHVDMDCFF…LPLAKIPGVG (182 aa)). D8 and D103 together coordinate Mg(2+). The active site involves E104.

It belongs to the DNA polymerase type-Y family. As to quaternary structure, monomer. Requires Mg(2+) as cofactor.

It is found in the cytoplasm. It carries out the reaction DNA(n) + a 2'-deoxyribonucleoside 5'-triphosphate = DNA(n+1) + diphosphate. In terms of biological role, poorly processive, error-prone DNA polymerase involved in untargeted mutagenesis. Copies undamaged DNA at stalled replication forks, which arise in vivo from mismatched or misaligned primer ends. These misaligned primers can be extended by PolIV. Exhibits no 3'-5' exonuclease (proofreading) activity. May be involved in translesional synthesis, in conjunction with the beta clamp from PolIII. This Escherichia coli (strain ATCC 8739 / DSM 1576 / NBRC 3972 / NCIMB 8545 / WDCM 00012 / Crooks) protein is DNA polymerase IV.